We begin with the raw amino-acid sequence, 132 residues long: Small ribosomal subunit protein uS8c (132 aa).

The protein belongs to the universal ribosomal protein uS8 family. In terms of assembly, part of the 30S ribosomal subunit.

The protein localises to the plastid. The protein resides in the chloroplast. One of the primary rRNA binding proteins, it binds directly to 16S rRNA central domain where it helps coordinate assembly of the platform of the 30S subunit. This is Small ribosomal subunit protein uS8c (rps8) from Anthoceros angustus (Hornwort).